Reading from the N-terminus, the 832-residue chain is Putative beta-glucosidase (832 aa).

The active site involves D225. One can recognise a PA14 domain in the interval 397–556; sequence TGKHGYVAKF…DPETEIDYAV (160 aa).

It belongs to the glycosyl hydrolase 3 family.

The protein localises to the cytoplasm. It catalyses the reaction Hydrolysis of terminal, non-reducing beta-D-glucosyl residues with release of beta-D-glucose.. The polypeptide is Putative beta-glucosidase (Schizosaccharomyces pombe (strain 972 / ATCC 24843) (Fission yeast)).